The sequence spans 109 residues: MRMILMFDMPTDTAEERKAYRKFRKFLLSEGFIMHQFSVYSKLLLNNSANTAMIARLKENNPKKGNITLLTVTEKQFARMIYLNGERDTSIANSDSRLVFLGEAFPDET.

D8 contacts Mg(2+).

It belongs to the CRISPR-associated endoribonuclease Cas2 protein family. In terms of assembly, homodimer, forms a heterotetramer with a Cas1 homodimer. Requires Mg(2+) as cofactor.

Functionally, CRISPR (clustered regularly interspaced short palindromic repeat), is an adaptive immune system that provides protection against mobile genetic elements (viruses, transposable elements and conjugative plasmids). CRISPR clusters contain sequences complementary to antecedent mobile elements and target invading nucleic acids. CRISPR clusters are transcribed and processed into CRISPR RNA (crRNA). Functions as a ssRNA-specific endoribonuclease. Involved in the integration of spacer DNA into the CRISPR cassette. In Streptococcus mutans serotype c (strain ATCC 700610 / UA159), this protein is CRISPR-associated endoribonuclease Cas2.